Consider the following 277-residue polypeptide: Shikimate dehydrogenase (NADP(+)) (277 aa).

Shikimate-binding positions include 15–17 (SKS) and threonine 64. Lysine 68 acts as the Proton acceptor in catalysis. Asparagine 89 and aspartate 104 together coordinate shikimate. NADP(+) contacts are provided by residues 129–133 (GAGGA), 153–158 (NRTAKR), and methionine 217. Tyrosine 219 contributes to the shikimate binding site. Residue glycine 242 coordinates NADP(+).

It belongs to the shikimate dehydrogenase family. As to quaternary structure, homodimer.

It carries out the reaction shikimate + NADP(+) = 3-dehydroshikimate + NADPH + H(+). The protein operates within metabolic intermediate biosynthesis; chorismate biosynthesis; chorismate from D-erythrose 4-phosphate and phosphoenolpyruvate: step 4/7. In terms of biological role, involved in the biosynthesis of the chorismate, which leads to the biosynthesis of aromatic amino acids. Catalyzes the reversible NADPH linked reduction of 3-dehydroshikimate (DHSA) to yield shikimate (SA). The sequence is that of Shikimate dehydrogenase (NADP(+)) from Hydrogenovibrio crunogenus (strain DSM 25203 / XCL-2) (Thiomicrospira crunogena).